Consider the following 381-residue polypeptide: Succinyl-diaminopimelate desuccinylase (381 aa).

His-71 serves as a coordination point for Zn(2+). Asp-73 is a catalytic residue. Asp-104 provides a ligand contact to Zn(2+). The active-site Proton acceptor is Glu-138. Zn(2+) contacts are provided by Glu-139, Glu-167, and His-353.

The protein belongs to the peptidase M20A family. DapE subfamily. Homodimer. It depends on Zn(2+) as a cofactor. Co(2+) is required as a cofactor.

It catalyses the reaction N-succinyl-(2S,6S)-2,6-diaminopimelate + H2O = (2S,6S)-2,6-diaminopimelate + succinate. It functions in the pathway amino-acid biosynthesis; L-lysine biosynthesis via DAP pathway; LL-2,6-diaminopimelate from (S)-tetrahydrodipicolinate (succinylase route): step 3/3. Functionally, catalyzes the hydrolysis of N-succinyl-L,L-diaminopimelic acid (SDAP), forming succinate and LL-2,6-diaminopimelate (DAP), an intermediate involved in the bacterial biosynthesis of lysine and meso-diaminopimelic acid, an essential component of bacterial cell walls. In Shewanella halifaxensis (strain HAW-EB4), this protein is Succinyl-diaminopimelate desuccinylase.